A 247-amino-acid chain; its full sequence is RNA-free ribonuclease P (247 aa).

The segment at 223-247 (SPEGEKEKGEADKKKKSHSEEAEFI) is disordered.

It belongs to the HARP family.

It carries out the reaction Endonucleolytic cleavage of RNA, removing 5'-extranucleotides from tRNA precursor.. In terms of biological role, RNA-free RNase P that catalyzes the removal of the 5'-leader sequence from pre-tRNA to produce the mature 5'-terminus. This is RNA-free ribonuclease P from Methanosarcina acetivorans (strain ATCC 35395 / DSM 2834 / JCM 12185 / C2A).